The primary structure comprises 537 residues: Woronin body major protein hexA (537 aa).

3 stretches are compositionally biased toward basic and acidic residues: residues 1–17, 59–70, and 116–134; these read MYSV…RDAQ, DRTSHVEREDTR, and DSRV…RSEN. Disordered stretches follow at residues 1–20, 59–79, 116–200, and 269–295; these read MYSV…QRTA, DRTS…PDPR, DSRV…KPVY, and PKPL…SRPS. The segment covering 135 to 144 has biased composition (low complexity); that stretch reads NAKQNKNKNN. Positions 272–281 are enriched in basic and acidic residues; that stretch reads LETRKGDSFS.

Belongs to the eIF-5A family. Hex1 subfamily. As to quaternary structure, forms oligomers. Self-assembles into hexagonal rods. Binds directly or indirectly to the Woronin body tether lah.

It localises to the cell septum. The protein resides in the cytoplasm. Functionally, major component of Woronin bodies, fungal-specific organelles that occlude septal pores in order to separate intact from damaged compartments. HexA binds directly or indirectly to the Woronin body tether that in turn is anchored at the rim of the septal pore. Woronin bodies are important for stress resistance and virulence. The protein is Woronin body major protein hexA of Aspergillus fumigatus (strain ATCC MYA-4609 / CBS 101355 / FGSC A1100 / Af293) (Neosartorya fumigata).